The chain runs to 260 residues: 3'-5' ssDNA/RNA exonuclease TatD (260 aa).

Residues Glu92, His128, and His153 each contribute to the a divalent metal cation site.

This sequence belongs to the metallo-dependent hydrolases superfamily. TatD-type hydrolase family. TatD subfamily. In terms of assembly, monomer. Requires Mg(2+) as cofactor.

The protein resides in the cytoplasm. In terms of biological role, 3'-5' exonuclease that prefers single-stranded DNA and RNA. May play a role in the H(2)O(2)-induced DNA damage repair. The chain is 3'-5' ssDNA/RNA exonuclease TatD from Pectobacterium atrosepticum (strain SCRI 1043 / ATCC BAA-672) (Erwinia carotovora subsp. atroseptica).